Reading from the N-terminus, the 417-residue chain is Phosphoglycerate kinase 1 (417 aa).

Residues Val23, Asp24, Phe25, Asn26, Asn38, Arg39, Ser62, His63, Gly65, Arg66, Leu121, Arg122, His168, and Arg169 each coordinate (2R)-3-phosphoglycerate. Residue Gly212 participates in ADP binding. A CDP-binding site is contributed by Gly212. The AMP site is built by Ala213 and Lys214. Ala213 contacts ATP. Ala213 lines the Mg(2+) pocket. Asp217 lines the CDP pocket. Asp217 contacts Mg(2+). Lys218 contributes to the AMP binding site. Lys218 contacts ATP. Gly236 contributes to the ADP binding site. Gly236 contacts CDP. 2 residues coordinate AMP: Gly237 and Gly311. Residues Gly237 and Gly311 each coordinate ATP. Gly336 and Phe341 together coordinate CDP. Phe341 contributes to the ADP binding site. Residue Glu342 participates in AMP binding. Glu342, Asp374, and Thr375 together coordinate ATP. Asp374 contributes to the Mg(2+) binding site.

Belongs to the phosphoglycerate kinase family. As to quaternary structure, monomer. It depends on Mg(2+) as a cofactor.

It localises to the cytoplasm. The protein localises to the mitochondrion. The enzyme catalyses (2R)-3-phosphoglycerate + ATP = (2R)-3-phospho-glyceroyl phosphate + ADP. It functions in the pathway carbohydrate degradation; glycolysis; pyruvate from D-glyceraldehyde 3-phosphate: step 2/5. Functionally, catalyzes one of the two ATP producing reactions in the glycolytic pathway via the reversible conversion of 1,3-diphosphoglycerate to 3-phosphoglycerate. Both L- and D- forms of purine and pyrimidine nucleotides can be used as substrates, but the activity is much lower on pyrimidines. Negatively regulates the biosynthesis of acetyl-CoA from pyruvate in the mitochondrion. The protein is Phosphoglycerate kinase 1 (PGK1) of Rhizopus niveus.